The chain runs to 349 residues: Very-long-chain 3-oxoacyl-CoA reductase (349 aa).

A helical membrane pass occupies residues alanine 19–alanine 39. NADP(+) contacts are provided by valine 65, aspartate 119, asparagine 146, tyrosine 221, lysine 225, valine 254, and serine 256. The Proton donor role is filled by tyrosine 221. Lysine 225 functions as the Lowers pKa of active site Tyr in the catalytic mechanism.

The protein belongs to the short-chain dehydrogenases/reductases (SDR) family.

It is found in the endoplasmic reticulum membrane. It carries out the reaction a very-long-chain (3R)-3-hydroxyacyl-CoA + NADP(+) = a very-long-chain 3-oxoacyl-CoA + NADPH + H(+). It functions in the pathway lipid metabolism; fatty acid biosynthesis. In terms of biological role, component of the microsomal membrane bound fatty acid elongation system, which produces the 26-carbon very long-chain fatty acids (VLCFA) from palmitate. Catalyzes the reduction of the 3-ketoacyl-CoA intermediate that is formed in each cycle of fatty acid elongation. VLCFAs serve as precursors for ceramide and sphingolipids. This Candida albicans (strain SC5314 / ATCC MYA-2876) (Yeast) protein is Very-long-chain 3-oxoacyl-CoA reductase.